A 2670-amino-acid polypeptide reads, in one-letter code: Inositol 1,4,5-trisphosphate-gated calcium channel ITPR3 (2670 aa).

Residues 1–2233 (MNEMSSFLHI…YVEGASTGVL (2233 aa)) are Cytoplasmic-facing. MIR domains lie at 113 to 173 (GDVV…LRSN), 174 to 224 (GDNV…INLF), 232 to 288 (EEVL…VEVV), 295 to 372 (GGAG…LDPT), and 378 to 434 (DSFV…IVSV). 1D-myo-inositol 1,4,5-trisphosphate is bound by residues Arg-266, Leu-269, and Arg-270. 6 residues coordinate 1D-myo-inositol 1,4,5-trisphosphate: Arg-503, Lys-507, Arg-510, Tyr-567, Arg-568, and Lys-569. Arg-743 contacts Ca(2+). Ser-916 and Ser-934 each carry phosphoserine. 2 residues coordinate Ca(2+): Glu-1122 and Glu-1125. Over residues 1138-1153 (EVEAGATKDKKERPSD) the composition is skewed to basic and acidic residues. Disordered stretches follow at residues 1138–1164 (EVEA…HGEK) and 1807–1835 (NMSD…SFSM). Phosphoserine occurs at positions 1813, 1832, and 1834. 2 residues coordinate Ca(2+): Glu-1881 and Glu-1945. The ATP site is built by Ala-1995, Glu-2148, and Lys-2151. A helical membrane pass occupies residues 2234-2254 (GSPLISLLFWILICFSIAALF). Residues 2255 to 2262 (TKRYSVRP) are Extracellular-facing. The helical transmembrane segment at 2263–2283 (LIVALILRSIYYLGIGPTLNI) threads the bilayer. Over 2284 to 2292 (LGALNLTNK) the chain is Cytoplasmic. Residues 2293–2310 (IVFVVSFVGNRGTFIRGY) form a helical membrane-spanning segment. At 2311–2324 (KAMVMDMEFLYHVG) the chain is on the extracellular side. The helical transmembrane segment at 2325–2345 (YILTSVLGLFAHELFYSILLF) threads the bilayer. Over 2346 to 2367 (DLIYREETLFNVIKSVTRNGRS) the chain is Cytoplasmic. A helical membrane pass occupies residues 2368–2388 (ILLTALLALILVYLFSIVGFL). Over 2389-2495 (FLKDDFILEV…ESLFPARVVY (107 aa)) the chain is Extracellular. Cys-2454 and Cys-2460 are oxidised to a cystine. The helical transmembrane segment at 2496 to 2516 (DLLFFFIVIIIVLNLIFGVII) threads the bilayer. The Cytoplasmic segment spans residues 2517–2670 (DTFADLRSEK…FVDVQNCMSR (154 aa)). ATP is bound by residues Cys-2537 and Phe-2538. Cys-2537 contributes to the Zn(2+) binding site. Residues Cys-2540 and His-2557 each contribute to the Zn(2+) site. Lys-2559, His-2562, Asn-2563, and Met-2564 together coordinate ATP. His-2562 contacts Zn(2+). Residue Thr-2580 coordinates Ca(2+). Phosphoserine occurs at positions 2608 and 2669.

Belongs to the InsP3 receptor family. In terms of assembly, homodimer. Homotetramer. Interacts with TRPC1, TRPC3, TRPC4. Interacts with TRPV4. Interacts with SIGMAR1. Found in a complex with AKT1 and PML; this interaction modulates IP3R3-phosphorylation and in turn ITPR3-dependent calcium release. Interacts with IRAG2 (via coiled-coil domain). Interacts with CABP1. Interacts with TMBIM4/LFG4. Interacts with CEMIP. Interacts with TESPA1. Interacts with TMEM203. Interacts with BOK; regulates ITPR3 expression. Interacts with BCL2L10. Interacts with CHGA and CHGB. Phosphorylated by AKT1 on serine and/or threonine residues.

The protein localises to the endoplasmic reticulum membrane. It localises to the cytoplasmic vesicle. Its subcellular location is the secretory vesicle membrane. The catalysed reaction is Ca(2+)(in) = Ca(2+)(out). Its activity is regulated as follows. Inositol 1,4,5-trisphosphate-gated calcium channel is regulated by cytosolic calcium in a biphasic manner. At low concentrations, cytosolic calcium binds at a high-affinity juxtamembrane domain (JD) calcium binding site, allowing ITPR3 to activate by escaping a low-energy resting state through an ensemble of preactivated states. At high cytosolic calcium concentrations, ITPR3 preferentially enters an inhibited state stabilized by calcium binding at a second, low-affinity cytoplasmic domain (CD) calcium binding site. In terms of biological role, inositol 1,4,5-trisphosphate-gated calcium channel that, upon 1D-myo-inositol 1,4,5-trisphosphate binding, transports calcium from the endoplasmic reticulum lumen to cytoplasm, thus releasing the intracellular calcium and therefore participates in cellular calcium ion homeostasis. 1D-myo-inositol 1,4,5-trisphosphate binds to the ligand-free channel without altering its global conformation, yielding the low-energy resting state, then progresses through resting-to preactivated transitions to the higher energy preactivated state, which increases affinity for calcium, promoting binding of the low basal cytosolic calcium at the juxtamembrane domain (JD) site, favoring the transition through the ensemble of high-energy intermediate states along the trajectory to the fully-open activated state. Upon opening, releases calcium in the cytosol where it can bind to the low-affinity cytoplasmic domain (CD) site and stabilizes the inhibited state to terminate calcium release. The polypeptide is Inositol 1,4,5-trisphosphate-gated calcium channel ITPR3 (Mus musculus (Mouse)).